A 174-amino-acid polypeptide reads, in one-letter code: Peptide deformylase (174 aa).

2 residues coordinate Fe cation: Cys-96 and His-138. Glu-139 is an active-site residue. His-142 serves as a coordination point for Fe cation.

Belongs to the polypeptide deformylase family. Fe(2+) serves as cofactor.

It catalyses the reaction N-terminal N-formyl-L-methionyl-[peptide] + H2O = N-terminal L-methionyl-[peptide] + formate. In terms of biological role, removes the formyl group from the N-terminal Met of newly synthesized proteins. Requires at least a dipeptide for an efficient rate of reaction. N-terminal L-methionine is a prerequisite for activity but the enzyme has broad specificity at other positions. The sequence is that of Peptide deformylase from Helicobacter pylori (strain P12).